A 311-amino-acid polypeptide reads, in one-letter code: Aspartate carbamoyltransferase catalytic subunit (311 aa).

The carbamoyl phosphate site is built by Arg55 and Thr56. Lys85 contributes to the L-aspartate binding site. Residues Arg106, His135, and Gln138 each coordinate carbamoyl phosphate. L-aspartate contacts are provided by Arg168 and Arg230. 2 residues coordinate carbamoyl phosphate: Leu268 and Pro269.

The protein belongs to the aspartate/ornithine carbamoyltransferase superfamily. ATCase family. Heterododecamer (2C3:3R2) of six catalytic PyrB chains organized as two trimers (C3), and six regulatory PyrI chains organized as three dimers (R2).

It catalyses the reaction carbamoyl phosphate + L-aspartate = N-carbamoyl-L-aspartate + phosphate + H(+). It participates in pyrimidine metabolism; UMP biosynthesis via de novo pathway; (S)-dihydroorotate from bicarbonate: step 2/3. Its function is as follows. Catalyzes the condensation of carbamoyl phosphate and aspartate to form carbamoyl aspartate and inorganic phosphate, the committed step in the de novo pyrimidine nucleotide biosynthesis pathway. The chain is Aspartate carbamoyltransferase catalytic subunit from Cronobacter sakazakii (strain ATCC BAA-894) (Enterobacter sakazakii).